Reading from the N-terminus, the 406-residue chain is Peptidase T (406 aa).

His78 contributes to the Zn(2+) binding site. Asp80 is an active-site residue. Asp139 provides a ligand contact to Zn(2+). The active-site Proton acceptor is the Glu173. 3 residues coordinate Zn(2+): Glu174, Asp196, and His378.

It belongs to the peptidase M20B family. Zn(2+) serves as cofactor.

It is found in the cytoplasm. It catalyses the reaction Release of the N-terminal residue from a tripeptide.. In terms of biological role, cleaves the N-terminal amino acid of tripeptides. The sequence is that of Peptidase T from Clostridium perfringens (strain SM101 / Type A).